The sequence spans 457 residues: UDP-N-acetylmuramoyl-tripeptide--D-alanyl-D-alanine ligase (457 aa).

Residue 109 to 115 coordinates ATP; it reads GSSGKTT.

This sequence belongs to the MurCDEF family. MurF subfamily.

The protein resides in the cytoplasm. The catalysed reaction is D-alanyl-D-alanine + UDP-N-acetyl-alpha-D-muramoyl-L-alanyl-gamma-D-glutamyl-meso-2,6-diaminopimelate + ATP = UDP-N-acetyl-alpha-D-muramoyl-L-alanyl-gamma-D-glutamyl-meso-2,6-diaminopimeloyl-D-alanyl-D-alanine + ADP + phosphate + H(+). It functions in the pathway cell wall biogenesis; peptidoglycan biosynthesis. Involved in cell wall formation. Catalyzes the final step in the synthesis of UDP-N-acetylmuramoyl-pentapeptide, the precursor of murein. The protein is UDP-N-acetylmuramoyl-tripeptide--D-alanyl-D-alanine ligase of Haemophilus influenzae (strain ATCC 51907 / DSM 11121 / KW20 / Rd).